We begin with the raw amino-acid sequence, 292 residues long: NAD kinase (292 aa).

Aspartate 64 functions as the Proton acceptor in the catalytic mechanism. NAD(+) contacts are provided by residues 64–65, 138–139, arginine 149, arginine 166, aspartate 168, 179–184, and glutamine 238; these read DG, ND, and TGYAVS.

The protein belongs to the NAD kinase family. A divalent metal cation is required as a cofactor.

The protein resides in the cytoplasm. The catalysed reaction is NAD(+) + ATP = ADP + NADP(+) + H(+). In terms of biological role, involved in the regulation of the intracellular balance of NAD and NADP, and is a key enzyme in the biosynthesis of NADP. Catalyzes specifically the phosphorylation on 2'-hydroxyl of the adenosine moiety of NAD to yield NADP. This is NAD kinase from Oleidesulfovibrio alaskensis (strain ATCC BAA-1058 / DSM 17464 / G20) (Desulfovibrio alaskensis).